Consider the following 133-residue polypeptide: Small ribosomal subunit protein uS8 (133 aa).

It belongs to the universal ribosomal protein uS8 family. Part of the 30S ribosomal subunit. Contacts proteins S5 and S12.

Functionally, one of the primary rRNA binding proteins, it binds directly to 16S rRNA central domain where it helps coordinate assembly of the platform of the 30S subunit. The protein is Small ribosomal subunit protein uS8 of Chlorobaculum parvum (strain DSM 263 / NCIMB 8327) (Chlorobium vibrioforme subsp. thiosulfatophilum).